The primary structure comprises 414 residues: Isocitrate dehydrogenase [NADP] cytoplasmic (414 aa).

Residue S2 is modified to N-acetylserine. Y42 carries the phosphotyrosine modification. Position 75–77 (75–77 (TIT)) interacts with NADP(+). Substrate is bound at residue T77. N6-acetyllysine is present on K81. NADP(+) is bound at residue R82. Substrate is bound by residues 94–100 (SPNGTIR) and R109. K126 bears the N6-succinyllysine mark. Substrate contacts are provided by R132 and K212. N6-acetyllysine is present on residues K224, K233, and K243. D252 serves as a coordination point for Mn(2+). K260 provides a ligand contact to NADP(+). 2 residues coordinate Mn(2+): D275 and D279. 310–315 (GTVTRH) contributes to the NADP(+) binding site. An N6-acetyllysine modification is found at K321. N328 is an NADP(+) binding site. S389 carries the phosphoserine modification. The residue at position 400 (K400) is an N6-succinyllysine.

Belongs to the isocitrate and isopropylmalate dehydrogenases family. Homodimer. Requires Mg(2+) as cofactor. The cofactor is Mn(2+). The N-terminus is blocked. In terms of processing, acetylation at Lys-374 dramatically reduces catalytic activity. Ubiquitous.

It localises to the cytoplasm. The protein localises to the cytosol. Its subcellular location is the peroxisome. It carries out the reaction D-threo-isocitrate + NADP(+) = 2-oxoglutarate + CO2 + NADPH. Functionally, catalyzes the NADP(+)-dependent oxidative decarboxylation of isocitrate (D-threo-isocitrate) to 2-ketoglutarate (2-oxoglutarate), which is required by other enzymes such as the phytanoyl-CoA dioxygenase. Plays a critical role in the generation of NADPH, an important cofactor in many biosynthesis pathways. May act as a corneal epithelial crystallin and may be involved in maintaining corneal epithelial transparency. This is Isocitrate dehydrogenase [NADP] cytoplasmic (Idh1) from Rattus norvegicus (Rat).